Here is a 680-residue protein sequence, read N- to C-terminus: DNA-directed RNA polymerase subunit beta' (680 aa).

4 residues coordinate Zn(2+): Cys69, Cys71, Cys87, and Cys90. Mg(2+)-binding residues include Asp489, Asp491, and Asp493.

It belongs to the RNA polymerase beta' chain family. RpoC1 subfamily. As to quaternary structure, in plastids the minimal PEP RNA polymerase catalytic core is composed of four subunits: alpha, beta, beta', and beta''. When a (nuclear-encoded) sigma factor is associated with the core the holoenzyme is formed, which can initiate transcription. It depends on Mg(2+) as a cofactor. Requires Zn(2+) as cofactor.

It is found in the plastid. The protein localises to the chloroplast. It carries out the reaction RNA(n) + a ribonucleoside 5'-triphosphate = RNA(n+1) + diphosphate. DNA-dependent RNA polymerase catalyzes the transcription of DNA into RNA using the four ribonucleoside triphosphates as substrates. This Barbarea verna (Land cress) protein is DNA-directed RNA polymerase subunit beta'.